A 304-amino-acid polypeptide reads, in one-letter code: Oxygen-dependent coproporphyrinogen-III oxidase (304 aa).

Residue Ser-93 participates in substrate binding. Positions 97 and 107 each coordinate a divalent metal cation. His-107 (proton donor) is an active-site residue. 109 to 111 lines the substrate pocket; that stretch reads NVR. Positions 146 and 176 each coordinate a divalent metal cation. An important for dimerization region spans residues 241 to 276; the sequence is YVEFNLVYDRGTLFGLQSGGRTESILMSLPPQVRWG. 259–261 contributes to the substrate binding site; sequence GGR.

The protein belongs to the aerobic coproporphyrinogen-III oxidase family. Homodimer. Requires a divalent metal cation as cofactor.

The protein resides in the cytoplasm. The catalysed reaction is coproporphyrinogen III + O2 + 2 H(+) = protoporphyrinogen IX + 2 CO2 + 2 H2O. The protein operates within porphyrin-containing compound metabolism; protoporphyrin-IX biosynthesis; protoporphyrinogen-IX from coproporphyrinogen-III (O2 route): step 1/1. In terms of biological role, involved in the heme biosynthesis. Catalyzes the aerobic oxidative decarboxylation of propionate groups of rings A and B of coproporphyrinogen-III to yield the vinyl groups in protoporphyrinogen-IX. This Pseudomonas savastanoi pv. phaseolicola (strain 1448A / Race 6) (Pseudomonas syringae pv. phaseolicola (strain 1448A / Race 6)) protein is Oxygen-dependent coproporphyrinogen-III oxidase.